We begin with the raw amino-acid sequence, 506 residues long: Cysteine--tRNA ligase (506 aa).

Cys34 is a binding site for Zn(2+). A 'HIGH' region motif is present at residues 36 to 46 (PTVYDFAHIGN). Zn(2+) contacts are provided by Cys230, His269, and Glu273. A 'KMSKS' region motif is present at residues 302–306 (KMSKS). Lys305 is a binding site for ATP.

Belongs to the class-I aminoacyl-tRNA synthetase family. As to quaternary structure, monomer. Zn(2+) is required as a cofactor.

It is found in the cytoplasm. The enzyme catalyses tRNA(Cys) + L-cysteine + ATP = L-cysteinyl-tRNA(Cys) + AMP + diphosphate. The chain is Cysteine--tRNA ligase from Brucella abortus (strain S19).